Reading from the N-terminus, the 215-residue chain is Enolase-phosphatase E1 (215 aa).

Positions 11 and 13 each coordinate Mg(2+). Residues 117 to 118 (SS) and Lys-151 each bind substrate. A Mg(2+)-binding site is contributed by Asp-174.

It belongs to the HAD-like hydrolase superfamily. MasA/MtnC family. As to quaternary structure, monomer. The cofactor is Mg(2+).

The protein resides in the cytoplasm. It is found in the nucleus. It catalyses the reaction 5-methylsulfanyl-2,3-dioxopentyl phosphate + H2O = 1,2-dihydroxy-5-(methylsulfanyl)pent-1-en-3-one + phosphate. The protein operates within amino-acid biosynthesis; L-methionine biosynthesis via salvage pathway; L-methionine from S-methyl-5-thio-alpha-D-ribose 1-phosphate: step 3/6. It functions in the pathway amino-acid biosynthesis; L-methionine biosynthesis via salvage pathway; L-methionine from S-methyl-5-thio-alpha-D-ribose 1-phosphate: step 4/6. Its function is as follows. Bifunctional enzyme that catalyzes the enolization of 2,3-diketo-5-methylthiopentyl-1-phosphate (DK-MTP-1-P) into the intermediate 2-hydroxy-3-keto-5-methylthiopentenyl-1-phosphate (HK-MTPenyl-1-P), which is then dephosphorylated to form the acireductone 1,2-dihydroxy-3-keto-5-methylthiopentene (DHK-MTPene). In Schizosaccharomyces japonicus (strain yFS275 / FY16936) (Fission yeast), this protein is Enolase-phosphatase E1 (utr4).